The sequence spans 137 residues: Small ribosomal subunit protein uS12 (137 aa).

The segment at 1-57 (MPTINQLVRKPRKSKVEKSKSPALNVGYNSHKKVQTNVSSPQKRGVATRVGTMTPKK) is disordered. Residue D102 is modified to 3-methylthioaspartic acid.

It belongs to the universal ribosomal protein uS12 family. As to quaternary structure, part of the 30S ribosomal subunit. Contacts proteins S8 and S17. May interact with IF1 in the 30S initiation complex.

Functionally, with S4 and S5 plays an important role in translational accuracy. In terms of biological role, interacts with and stabilizes bases of the 16S rRNA that are involved in tRNA selection in the A site and with the mRNA backbone. Located at the interface of the 30S and 50S subunits, it traverses the body of the 30S subunit contacting proteins on the other side and probably holding the rRNA structure together. The combined cluster of proteins S8, S12 and S17 appears to hold together the shoulder and platform of the 30S subunit. In Streptococcus sanguinis (strain SK36), this protein is Small ribosomal subunit protein uS12.